Reading from the N-terminus, the 49-residue chain is Large ribosomal subunit protein eL40 (49 aa).

This sequence belongs to the eukaryotic ribosomal protein eL40 family.

The polypeptide is Large ribosomal subunit protein eL40 (Haloquadratum walsbyi (strain DSM 16790 / HBSQ001)).